A 167-amino-acid chain; its full sequence is Leptin (167 aa).

The first 21 residues, 1–21 (MYWRTLWGFLWLWPYLFYIQA), serve as a signal peptide directing secretion. Cys-117 and Cys-167 are disulfide-bonded.

The protein belongs to the leptin family.

It localises to the secreted. Key player in the regulation of energy balance and body weight control. Once released into the circulation, has central and peripheral effects by binding LEPR, found in many tissues, which results in the activation of several major signaling pathways. In the hypothalamus, acts as an appetite-regulating factor that induces a decrease in food intake and an increase in energy consumption by inducing anorexinogenic factors and suppressing orexigenic neuropeptides, also regulates bone mass and secretion of hypothalamo-pituitary-adrenal hormones. In the periphery, increases basal metabolism, influences reproductive function, regulates pancreatic beta-cell function and insulin secretion, is pro-angiogenic for endothelial cell and affects innate and adaptive immunity. In the arcuate nucleus of the hypothalamus, activates by depolarization POMC neurons inducing FOS and SOCS3 expression to release anorexigenic peptides and inhibits by hyperpolarization NPY neurons inducing SOCS3 with a consequent reduction on release of orexigenic peptides. In addition to its known satiety inducing effect, has a modulatory role in nutrient absorption. In the intestine, reduces glucose absorption by enterocytes by activating PKC and leading to a sequential activation of p38, PI3K and ERK signaling pathways which exerts an inhibitory effect on glucose absorption. Acts as a growth factor on certain tissues, through the activation of different signaling pathways increases expression of genes involved in cell cycle regulation such as CCND1, via JAK2-STAT3 pathway, or VEGFA, via MAPK1/3 and PI3K-AKT1 pathways. May also play an apoptotic role via JAK2-STAT3 pathway and up-regulation of BIRC5 expression. Pro-angiogenic, has mitogenic activity on vascular endothelial cells and plays a role in matrix remodeling by regulating the expression of matrix metalloproteinases (MMPs) and tissue inhibitors of metalloproteinases (TIMPs). In innate immunity, modulates the activity and function of neutrophils by increasing chemotaxis and the secretion of oxygen radicals. Increases phagocytosis by macrophages and enhances secretion of pro-inflammatory mediators. Increases cytotoxic ability of NK cells. Plays a pro-inflammatory role, in synergy with IL1B, by inducing NOS2 which promotes the production of IL6, IL8 and Prostaglandin E2, through a signaling pathway that involves JAK2, PI3K, MAP2K1/MEK1 and MAPK14/p38. In adaptive immunity, promotes the switch of memory T-cells towards T helper-1 cell immune responses. Increases CD4(+)CD25(-) T-cell proliferation and reduces autophagy during TCR (T-cell receptor) stimulation, through MTOR signaling pathway activation and BCL2 up-regulation. In Macaca mulatta (Rhesus macaque), this protein is Leptin (LEP).